The primary structure comprises 527 residues: Bifunctional purine biosynthesis protein PurH (527 aa).

In terms of domain architecture, MGS-like spans 1–149 (MASDFLPVRR…KNFARVAVAT (149 aa)).

It belongs to the PurH family.

It carries out the reaction (6R)-10-formyltetrahydrofolate + 5-amino-1-(5-phospho-beta-D-ribosyl)imidazole-4-carboxamide = 5-formamido-1-(5-phospho-D-ribosyl)imidazole-4-carboxamide + (6S)-5,6,7,8-tetrahydrofolate. It catalyses the reaction IMP + H2O = 5-formamido-1-(5-phospho-D-ribosyl)imidazole-4-carboxamide. It participates in purine metabolism; IMP biosynthesis via de novo pathway; 5-formamido-1-(5-phospho-D-ribosyl)imidazole-4-carboxamide from 5-amino-1-(5-phospho-D-ribosyl)imidazole-4-carboxamide (10-formyl THF route): step 1/1. It functions in the pathway purine metabolism; IMP biosynthesis via de novo pathway; IMP from 5-formamido-1-(5-phospho-D-ribosyl)imidazole-4-carboxamide: step 1/1. The polypeptide is Bifunctional purine biosynthesis protein PurH (Xanthomonas oryzae pv. oryzae (strain KACC10331 / KXO85)).